The primary structure comprises 417 residues: mRNA cap guanine-N(7) methyltransferase (417 aa).

Residues 129-412 (SPIIKLRNFN…LYTVFAFKKV (284 aa)) enclose the mRNA cap 0 methyltransferase domain. 138–139 (NN) contacts mRNA. Residues Lys-142, Gly-160, Asp-182, Asp-211, Gln-237, and Tyr-242 each contribute to the S-adenosyl-L-methionine site.

This sequence belongs to the class I-like SAM-binding methyltransferase superfamily. mRNA cap 0 methyltransferase family.

Its subcellular location is the nucleus. It catalyses the reaction a 5'-end (5'-triphosphoguanosine)-ribonucleoside in mRNA + S-adenosyl-L-methionine = a 5'-end (N(7)-methyl 5'-triphosphoguanosine)-ribonucleoside in mRNA + S-adenosyl-L-homocysteine. Its function is as follows. Responsible for methylating the 5'-cap structure of mRNAs. This is mRNA cap guanine-N(7) methyltransferase (ABD1) from Candida glabrata (strain ATCC 2001 / BCRC 20586 / JCM 3761 / NBRC 0622 / NRRL Y-65 / CBS 138) (Yeast).